Consider the following 144-residue polypeptide: Peptide methionine sulfoxide reductase MsrB (144 aa).

The MsrB domain maps to 5–127 (KEEKIKSLNR…NSAALRFIPK (123 aa)). The active-site Nucleophile is Cys-116.

Belongs to the MsrB Met sulfoxide reductase family.

It carries out the reaction L-methionyl-[protein] + [thioredoxin]-disulfide + H2O = L-methionyl-(R)-S-oxide-[protein] + [thioredoxin]-dithiol. This chain is Peptide methionine sulfoxide reductase MsrB, found in Bacillus velezensis (strain DSM 23117 / BGSC 10A6 / LMG 26770 / FZB42) (Bacillus amyloliquefaciens subsp. plantarum).